We begin with the raw amino-acid sequence, 373 residues long: Valienol-1-phosphate guanylyltransferase (373 aa).

Substrate contacts are provided by residues Gly-177 and 192 to 193 (EK).

It belongs to the bacterial/plant glucose-1-phosphate adenylyltransferase family. Mg(2+) is required as a cofactor.

It carries out the reaction valienol 1-phosphate + GTP + H(+) = GDP-valienol + diphosphate. Functionally, involved in the biosynthesis of the antifungal agent validamycin A. Catalyzes the conversion of valienol 1-phosphate to GDP-valienol and less effectively to ADP-valienol or other NDP derivatives. This chain is Valienol-1-phosphate guanylyltransferase, found in Streptomyces hygroscopicus subsp. limoneus.